Here is a 180-residue protein sequence, read N- to C-terminus: Inner membrane-spanning protein YciB (180 aa).

Transmembrane regions (helical) follow at residues 25–45 (QNATLYMLITSVICITLCYVI), 49–69 (VSKLSIISTTVLLVSGSITLI), 76–96 (IKIKPTILYVIFGIIFLMSGI), 118–138 (IILSYRTAAFFFFMAVVNEIV), and 150–170 (FKVFGVIPVTFIFILLQLPLL).

Belongs to the YciB family.

The protein localises to the cell inner membrane. Its function is as follows. Plays a role in cell envelope biogenesis, maintenance of cell envelope integrity and membrane homeostasis. The chain is Inner membrane-spanning protein YciB from Rickettsia felis (strain ATCC VR-1525 / URRWXCal2) (Rickettsia azadi).